Consider the following 80-residue polypeptide: Progonadoliberin-1 (80 aa).

Residues 1–21 (MGIKRALWWMVVCVVVLQVSA) form the signal peptide. The residue at position 22 (Q22) is a Pyrrolidone carboxylic acid. A Glycine amide modification is found at G31.

Belongs to the GnRH family.

Its subcellular location is the secreted. Its function is as follows. Stimulates the secretion of gonadotropins. The protein is Progonadoliberin-1 (gnrh1) of Clarias gariepinus (North African catfish).